The sequence spans 350 residues: Dihydroorotase (350 aa).

Residues histidine 17 and histidine 19 each contribute to the Zn(2+) site. Substrate contacts are provided by residues 19-21 (HLR) and asparagine 45. Zn(2+)-binding residues include lysine 103, histidine 140, and histidine 178. At lysine 103 the chain carries N6-carboxylysine. Histidine 140 lines the substrate pocket. Leucine 224 is a binding site for substrate. Aspartate 252 is a Zn(2+) binding site. Aspartate 252 is an active-site residue. Histidine 256 and alanine 268 together coordinate substrate.

The protein belongs to the metallo-dependent hydrolases superfamily. DHOase family. Class II DHOase subfamily. Homodimer. Zn(2+) serves as cofactor.

The enzyme catalyses (S)-dihydroorotate + H2O = N-carbamoyl-L-aspartate + H(+). Its pathway is pyrimidine metabolism; UMP biosynthesis via de novo pathway; (S)-dihydroorotate from bicarbonate: step 3/3. Its function is as follows. Catalyzes the reversible cyclization of carbamoyl aspartate to dihydroorotate. In Buchnera aphidicola subsp. Acyrthosiphon pisum (strain APS) (Acyrthosiphon pisum symbiotic bacterium), this protein is Dihydroorotase.